Consider the following 160-residue polypeptide: MTAAVPNARLVDVELDESIGRSTPDVEHERAVAIFDLIEENSFHPIGDDTGGPYRLKLSLMESRLIFAITREAGEDVATHILSLTPLRRVVRDYFMICESYYQAIRSATPSKIEAIDMGRRGLHNEGSQTLQNRLQGKIEVDFNTARRLFTLVCVLHWRG.

This sequence belongs to the UPF0262 family.

This is UPF0262 protein Oant_0325 from Brucella anthropi (strain ATCC 49188 / DSM 6882 / CCUG 24695 / JCM 21032 / LMG 3331 / NBRC 15819 / NCTC 12168 / Alc 37) (Ochrobactrum anthropi).